The following is a 275-amino-acid chain: S-formylglutathione hydrolase (275 aa).

Residues Ser145, Asp221, and His254 each act as charge relay system in the active site.

It belongs to the esterase D family.

It carries out the reaction S-formylglutathione + H2O = formate + glutathione + H(+). Its function is as follows. Serine hydrolase involved in the detoxification of formaldehyde. Hydrolyzes S-formylglutathione to glutathione and formate. The chain is S-formylglutathione hydrolase from Haemophilus influenzae (strain ATCC 51907 / DSM 11121 / KW20 / Rd).